A 430-amino-acid polypeptide reads, in one-letter code: Peptidoglycan DD-endopeptidase ShyA (430 aa).

A signal peptide spans 1-35; the sequence is MISKSIILRFSELSMRKKATLVGLPLLAVAAISSS. Zn(2+) is bound by residues His-297, Asp-301, and His-378.

The protein belongs to the peptidase M23B family. The cofactor is Zn(2+).

The protein localises to the periplasm. It functions in the pathway cell wall degradation; peptidoglycan degradation. Its activity is regulated as follows. Reduced activity in 0.5 mM EDTA and a complete loss of activity at higher EDTA concentrations. The effect of EDTA can be reversed by addition of 1 mM ZnCl(2). Conformational switching between open (catalytically active) and closed (catalytically inactive) conformation of this protein is suggested mechanism of its regulation. The signal or inducer of the conformational shift to the open form unmasking the active site is currently not understood. Its function is as follows. Cell wall peptidoglycan (PG) DD-endopeptidase essential for cell growth and elongation. Hydrolyzes peptide cross-links which covalently connect adjacent PG strands probably to allow insertion of new glycans and thus cell wall expansion. Degrades purified whole PG sacculi in vitro. Releases predominantly short glycan chains from the PG. Cleaves D,D cross-linked muropeptides specifically preferring dimeric tetrapeptide-tetrapeptide (D44) substrates and has only little activity on dimeric tetrapeptide-pentapeptide (D45) substrates. Also converts more than 50% of tetrapeptide-tripeptide (D43) to product as well as more than 50% of D43M, which contains D-Met instead of D-Ala in the fourth position of the acceptor moiety. Cleaves the D,D bond between diaminopimelic acid (DAP) and D-Ala of the PG substrate in vitro. No cleavage of L,D bond connecting two DAP moieties. This is Peptidoglycan DD-endopeptidase ShyA from Vibrio cholerae serotype O1 (strain ATCC 39315 / El Tor Inaba N16961).